The chain runs to 393 residues: Putative cytochrome P450 143 (393 aa).

Cysteine 342 serves as a coordination point for heme.

This sequence belongs to the cytochrome P450 family. Heme serves as cofactor.

In Mycobacterium bovis (strain ATCC BAA-935 / AF2122/97), this protein is Putative cytochrome P450 143 (cyp143).